The sequence spans 535 residues: MATCIWLRSCGARRLGWTFPGCRLRPRAGGLVPASGPAPGPAQLRCYAGGLAGLSAALLRTDSFVGGRWLPAAATFPVQDPASGAALGMVADCGVREARAAVRAAYEAFCCWREVSAKERSSLLRKWYNLMIQNKDDLARIITAESGKPLKEAHGEILYSAFFLEWFSEEARRVYGDIIYTPAKDRRALVLKQPIGVAAVITPWNFPSAMITRKVGAALAAGCTVVVKPAEDTPFSALALAELASQAGIPSGVYNVIPCSRKNAKEVGEAICTDPLVSKISFTGSTTTGKILLHHAANSVKRVSMELGGLAPFIVFDSANVDQAVAGAMASKFRNTGQTCVCSNQFLVQRGIHDAFVKAFAEAMKKNLRVGNGFEEGTTQGPLINEKAVEKVEKQVNDAVSKGATVVTGGKRHQLGKNFFEPTLLCNVTQDMLCTHEETFGPLAPVIKFDTEEEAIAIANAADVGLAGYFYSQDPAQIWRVAEQLEVGMVGVNEGLISSVECPFGGVKQSGLGREGSKYGIDEYLELKYVCYGGL.

A mitochondrion-targeting transit peptide spans 1–47 (MATCIWLRSCGARRLGWTFPGCRLRPRAGGLVPASGPAPGPAQLRCY). Lys126 bears the N6-acetyllysine; alternate mark. Lys126 carries the post-translational modification N6-succinyllysine; alternate. N6-succinyllysine occurs at positions 135 and 184. Residues Arg213 and 228–231 (KPAE) each bind NAD(+). Arg213 is a substrate binding site. N6-acetyllysine; alternate is present on Lys265. Lys265 carries the post-translational modification N6-succinyllysine; alternate. Residue 284 to 289 (GSTTTG) coordinates NAD(+). Residue Glu306 is the Proton acceptor of the active site. Arg334 serves as a coordination point for substrate. Cys340 functions as the Nucleophile in the catalytic mechanism. A disulfide bridge connects residues Cys340 and Cys342. Lys365 carries the N6-acetyllysine modification. Residue Lys402 is modified to N6-succinyllysine. The residue at position 411 (Lys411) is an N6-acetyllysine. Ser498 is a binding site for substrate. At Ser499 the chain carries Phosphoserine.

It belongs to the aldehyde dehydrogenase family. In terms of assembly, homotetramer.

Its subcellular location is the mitochondrion. The enzyme catalyses succinate semialdehyde + NAD(+) + H2O = succinate + NADH + 2 H(+). Its pathway is amino-acid degradation; 4-aminobutanoate degradation. Redox-regulated. Inhibited under oxydizing conditions. Functionally, catalyzes one step in the degradation of the inhibitory neurotransmitter gamma-aminobutyric acid (GABA). In Pan paniscus (Pygmy chimpanzee), this protein is Succinate-semialdehyde dehydrogenase, mitochondrial (ALDH5A1).